We begin with the raw amino-acid sequence, 1369 residues long: Serine/threonine-protein kinase SIK3 (1369 aa).

Residues 26 to 55 (LLPPPAAGPPAAPAAVPPAAVPARPTAPAS) are disordered. Over residues 27-45 (LPPPAAGPPAAPAAVPPAA) the composition is skewed to pro residues. Residues 46 to 55 (VPARPTAPAS) show a composition bias toward low complexity. A Protein kinase domain is found at 66 to 317 (YEIDRTIGKG…MEQICRHKWM (252 aa)). The residue at position 71 (threonine 71) is a Phosphothreonine. Residues 72-80 (IGKGNFAVV) and lysine 95 each bind ATP. The active-site Proton acceptor is aspartate 188. The residue at position 221 (threonine 221) is a Phosphothreonine. In terms of domain architecture, UBA spans 344–384 (PLNDDVLLAMEDMGLDKERTLQSLRSDAYDHYSAIYSLLCD). Threonine 469 bears the Phosphothreonine mark. Residues serine 551, serine 591, serine 592, serine 674, and serine 695 each carry the phosphoserine modification. The interval 775–821 (IQPSSPPPNHPSNHLFRQPSNSPPPVSSAMITSHGATSPSQFQGLPS) is disordered. A compositionally biased stretch (polar residues) spans 803–818 (AMITSHGATSPSQFQG). Serine 914 is subject to Phosphoserine. The interval 942–993 (LFSDQSRGSPSSYSPSTGVGFPPTQALKVPPLDQFPTFPPSAQQQPPHYTTS) is disordered. The span at 944–957 (SDQSRGSPSSYSPS) shows a compositional bias: low complexity. Residues 981–993 (PSAQQQPPHYTTS) are compositionally biased toward polar residues. Serine 1026 carries the post-translational modification Phosphoserine. Arginine 1034 carries the omega-N-methylarginine modification. Residues 1314–1338 (DEEDEECGVSLGHEHPGLGDGSQHL) are disordered.

It belongs to the protein kinase superfamily. CAMK Ser/Thr protein kinase family. SNF1 subfamily. As to quaternary structure, binds to and is activated by YWHAZ when phosphorylated on Thr-221. Interacts with 14-3-3 proteins. Interacts with HDAC4; this interaction leads to HDAC4 retention in the cytoplasm. Interacts with DEPTOR, MLST8/GbetaL, RICTOR and RPTOR. The cofactor is Mg(2+). In terms of processing, phosphorylated at Thr-221 by STK11/LKB1 in complex with STE20-related adapter-alpha (STRADA) pseudo kinase and CAB39. Expressed in hypertrophic chondrocytes in the growth plate.

It is found in the cytoplasm. It carries out the reaction L-seryl-[protein] + ATP = O-phospho-L-seryl-[protein] + ADP + H(+). The catalysed reaction is L-threonyl-[protein] + ATP = O-phospho-L-threonyl-[protein] + ADP + H(+). Its activity is regulated as follows. Activated by phosphorylation on Thr-221. Functionally, positive regulator of mTOR signaling that functions by triggering the degradation of DEPTOR, an mTOR inhibitor. Required for chondrocyte hypertrophy during skeletogenesis. Negatively regulates cAMP signaling pathway possibly by acting on CRTC2/TORC2 and CRTC3/TORC3. Prevents HDAC4 translocation to the nucleus. This is Serine/threonine-protein kinase SIK3 (Sik3) from Mus musculus (Mouse).